An 88-amino-acid polypeptide reads, in one-letter code: Homeobox protein knotted-1-like 3 (88 aa).

In terms of domain architecture, ELK spans 4–24; that stretch reads ELKKQLLRKYSGCLGNLRKEL. A DNA-binding region (homeobox; TALE-type) is located at residues 25-88; that stretch reads CKKRKKDKLP…NQRKRHWKPS (64 aa).

It belongs to the TALE/KNOX homeobox family. Strongly expressed in ear inflorescence primordia and shoot meristem. Weakly expressed in embryos. Absent from leaves.

Its subcellular location is the nucleus. Its function is as follows. Probably binds to the DNA sequence 5'-TGAC-3'. This is Homeobox protein knotted-1-like 3 (KNOX3) from Zea mays (Maize).